The sequence spans 81 residues: UPF0181 protein Spro_2806 (81 aa).

Positions 43–81 (EKHQGDQVSVMFDDEDDDEEYQERPDDQADDDSEEDENY) are disordered. 2 stretches are compositionally biased toward acidic residues: residues 54 to 63 (FDDEDDDEEY) and 70 to 81 (QADDDSEEDENY).

The protein belongs to the UPF0181 family.

This Serratia proteamaculans (strain 568) protein is UPF0181 protein Spro_2806.